We begin with the raw amino-acid sequence, 154 residues long: Sperm microtubule associated protein 1 (154 aa).

This is Sperm microtubule associated protein 1 from Homo sapiens (Human).